We begin with the raw amino-acid sequence, 437 residues long: uncharacterized protein (437 aa).

The chain crosses the membrane as a helical span at residues Leu47–Ala67.

The protein resides in the membrane. This is an uncharacterized protein from Methanocaldococcus jannaschii (strain ATCC 43067 / DSM 2661 / JAL-1 / JCM 10045 / NBRC 100440) (Methanococcus jannaschii).